The chain runs to 218 residues: Probable cutinase 3 (218 aa).

Residues 1-17 (MSLRSVLVAALAALAVA) form the signal peptide. 2 cysteine pairs are disulfide-bonded: Cys41–Cys120 and Cys67–Cys81. Residue Ser131 is the Nucleophile of the active site. A disulfide bond links Cys182 and Cys189. Residue Asp186 is part of the active site. The active-site Proton donor/acceptor is the His199.

This sequence belongs to the cutinase family.

It localises to the secreted. The catalysed reaction is cutin + H2O = cutin monomers.. Its function is as follows. Catalyzes the hydrolysis of complex carboxylic polyesters found in the cell wall of plants. Degrades cutin, a macromolecule that forms the structure of the plant cuticle. The polypeptide is Probable cutinase 3 (Aspergillus terreus (strain NIH 2624 / FGSC A1156)).